A 288-amino-acid polypeptide reads, in one-letter code: Quinate/shikimate dehydrogenase (288 aa).

Substrate-binding residues include Lys71 and Asp107. NAD(+) contacts are provided by residues 132 to 135 (AGGA), 155 to 158 (NRKD), Lys205, 232 to 235 (CVYN), and Gly255.

This sequence belongs to the shikimate dehydrogenase family. As to quaternary structure, homodimer.

It carries out the reaction L-quinate + NAD(+) = 3-dehydroquinate + NADH + H(+). The enzyme catalyses L-quinate + NADP(+) = 3-dehydroquinate + NADPH + H(+). The catalysed reaction is shikimate + NADP(+) = 3-dehydroshikimate + NADPH + H(+). It catalyses the reaction shikimate + NAD(+) = 3-dehydroshikimate + NADH + H(+). The protein operates within metabolic intermediate biosynthesis; chorismate biosynthesis; chorismate from D-erythrose 4-phosphate and phosphoenolpyruvate: step 4/7. Its function is as follows. The actual biological function of YdiB remains unclear, nor is it known whether 3-dehydroshikimate or quinate represents the natural substrate. Catalyzes the reversible NAD-dependent reduction of both 3-dehydroshikimate (DHSA) and 3-dehydroquinate to yield shikimate (SA) and quinate, respectively. It can use both NAD or NADP for catalysis, however it has higher catalytic efficiency with NAD. The protein is Quinate/shikimate dehydrogenase of Salmonella agona (strain SL483).